The chain runs to 603 residues: Cdc42-interacting protein 4 (603 aa).

The segment at 1–117 is required for podosome formation and interaction with AKAP9 and microtubules; it reads MDWGTELWDQ…EMKQERKMHF (117 aa). Residues 1 to 117 form a required for translocation to the plasma membrane in response to insulin region; that stretch reads MDWGTELWDQ…EMKQERKMHF (117 aa). An F-BAR domain is found at 1–264; sequence MDWGTELWDQ…AAESVDAKND (264 aa). A coiled-coil region spans residues 67–259; it reads FSQQQSFVQL…EGMKVAAESV (193 aa). Residues 293–539 form an interaction with CDC42 region; it reads RVPSDSSLGT…YTEFDEDFEE (247 aa). Positions 293–603 are interaction with PDE6G; that stretch reads RVPSDSSLGT…PTSYLRVTLN (311 aa). The tract at residues 295–358 is disordered; that stretch reads PSDSSLGTPD…PSSPRSGRDP (64 aa). Residues Ser-296, Ser-298, and Ser-299 each carry the phosphoserine modification. The segment covering 316–329 has biased composition (basic residues); it reads SRAKRWPFGKKNKP. Residues 333 to 346 show a composition bias toward low complexity; that stretch reads SLSLLGGHLPSTLS. Residues Ser-335 and Ser-351 each carry the phosphoserine modification. Residues 388-481 are a coiled coil; the sequence is TEDFSHLPPE…ESRVLSNRGD (94 aa). Residues 393 to 470 form the REM-1 domain; sequence HLPPEQQRKR…VQKYEAWLAE (78 aa). Positions 471-603 are required for interaction with FASLG and localization to lysosomes; it reads AESRVLSNRG…PTSYLRVTLN (133 aa). The segment at 477–541 is disordered; that stretch reads SNRGDSLSRH…EFDEDFEEPA (65 aa). The residue at position 482 (Ser-482) is a Phosphoserine. The interval 487–543 is interaction with DNM2 and WASL; sequence ARPPDPPTTAPPDSSSSSTNSGSQDNKESSSEEPPSEGQDTPIYTEFDEDFEEPASP. Residues 497 to 510 show a composition bias toward low complexity; that stretch reads PPDSSSSSTNSGSQ. The interval 532–603 is interaction with DNM1 and WASL; that stretch reads EFDEDFEEPA…PTSYLRVTLN (72 aa). The segment at 540 to 603 is required for podosome formation; that stretch reads PASPIGQCVA…PTSYLRVTLN (64 aa). Residues 542-603 form the SH3 domain; it reads SPIGQCVAIY…PTSYLRVTLN (62 aa). An interaction with WAS region spans residues 546–603; the sequence is QCVAIYHFEGSSEGTVSMSEGEDLSLMEEDKGDGWTRVRRKQGAEGYVPTSYLRVTLN. The tract at residues 548–603 is interaction with ARHGAP17, DAAM1, DIAPH1 and DIAPH2; it reads VAIYHFEGSSEGTVSMSEGEDLSLMEEDKGDGWTRVRRKQGAEGYVPTSYLRVTLN.

It belongs to the FNBP1 family. In terms of assembly, homodimerizes, the dimers can polymerize end-to-end to form filamentous structures. Interacts with AKAP9, ARHGAP17, DAAM1, DIAPH1, DIAPH2, DNM1, FASLG/FASL, GAPVD1, LYN, microtubules, PDE6G, SRC and WAS/WASP. Interacts with the ligand binding domain of the thyroid receptor (TR) in the presence of thyroid hormone. May interact with CTNNB1 and HD/HTT. Interacts specifically with GTP-bound CDC42 and RHOQ. Interacts with DNM2 and WASL. Tyrosine phosphorylated. Also phosphorylated by PKA.

The protein resides in the cytoplasm. Its subcellular location is the cytoskeleton. The protein localises to the cell cortex. It localises to the lysosome. It is found in the golgi apparatus. The protein resides in the cell membrane. Its subcellular location is the cell projection. The protein localises to the phagocytic cup. Its function is as follows. Required to coordinate membrane tubulation with reorganization of the actin cytoskeleton during endocytosis. Binds to lipids such as phosphatidylinositol 4,5-bisphosphate and phosphatidylserine and promotes membrane invagination and the formation of tubules. Also promotes CDC42-induced actin polymerization by recruiting WASL/N-WASP which in turn activates the Arp2/3 complex. Actin polymerization may promote the fission of membrane tubules to form endocytic vesicles. Required for the formation of podosomes, actin-rich adhesion structures specific to monocyte-derived cells. May be required for the lysosomal retention of FASLG/FASL. Required for translocation of GLUT4 to the plasma membrane in response to insulin signaling. The chain is Cdc42-interacting protein 4 (Trip10) from Mus musculus (Mouse).